The sequence spans 154 residues: Ubiquitin-conjugating enzyme E2 L5 (154 aa).

In terms of domain architecture, UBC core spans 2 to 149 (AASRRLMKEL…AEEFTKKYGE (148 aa)). The active-site Glycyl thioester intermediate is the Cys86.

Belongs to the ubiquitin-conjugating enzyme family.

It carries out the reaction S-ubiquitinyl-[E1 ubiquitin-activating enzyme]-L-cysteine + [E2 ubiquitin-conjugating enzyme]-L-cysteine = [E1 ubiquitin-activating enzyme]-L-cysteine + S-ubiquitinyl-[E2 ubiquitin-conjugating enzyme]-L-cysteine.. Its pathway is protein modification; protein ubiquitination. In terms of biological role, catalyzes the covalent attachment of ubiquitin to other proteins. In Homo sapiens (Human), this protein is Ubiquitin-conjugating enzyme E2 L5.